A 142-amino-acid polypeptide reads, in one-letter code: Large ribosomal subunit protein uL11 (142 aa).

This sequence belongs to the universal ribosomal protein uL11 family. Part of the ribosomal stalk of the 50S ribosomal subunit. Interacts with L10 and the large rRNA to form the base of the stalk. L10 forms an elongated spine to which L12 dimers bind in a sequential fashion forming a multimeric L10(L12)X complex. In terms of processing, one or more lysine residues are methylated.

Its function is as follows. Forms part of the ribosomal stalk which helps the ribosome interact with GTP-bound translation factors. The sequence is that of Large ribosomal subunit protein uL11 from Dichelobacter nodosus (strain VCS1703A).